A 252-amino-acid polypeptide reads, in one-letter code: Ribosome maturation factor RimP (252 aa).

A disordered region spans residues 188–252 (QGAAPGTEGG…PAAGPGAQDE (65 aa)). Basic residues predominate over residues 208–224 (ARRPHQPKPKKAKKKGP).

The protein belongs to the RimP family.

It is found in the cytoplasm. Required for maturation of 30S ribosomal subunits. The sequence is that of Ribosome maturation factor RimP from Rhodospirillum centenum (strain ATCC 51521 / SW).